Here is a 400-residue protein sequence, read N- to C-terminus: Enoyl-[acyl-carrier-protein] reductase [NADH] (400 aa).

Residues 48–53, 74–75, 111–112, and 139–140 contribute to the NAD(+) site; these read GSSSGY, FE, DA, and LA. Tyr225 serves as a coordination point for substrate. Tyr235 serves as the catalytic Proton donor. NAD(+)-binding positions include Lys244 and 273–275; that span reads VVT.

The protein belongs to the TER reductase family. In terms of assembly, monomer.

The catalysed reaction is a 2,3-saturated acyl-[ACP] + NAD(+) = a (2E)-enoyl-[ACP] + NADH + H(+). Its pathway is lipid metabolism; fatty acid biosynthesis. Involved in the final reduction of the elongation cycle of fatty acid synthesis (FAS II). Catalyzes the reduction of a carbon-carbon double bond in an enoyl moiety that is covalently linked to an acyl carrier protein (ACP). The protein is Enoyl-[acyl-carrier-protein] reductase [NADH] of Shewanella piezotolerans (strain WP3 / JCM 13877).